A 234-amino-acid chain; its full sequence is DNA repair protein RecO (234 aa).

Belongs to the RecO family.

Involved in DNA repair and RecF pathway recombination. The protein is DNA repair protein RecO of Idiomarina loihiensis (strain ATCC BAA-735 / DSM 15497 / L2-TR).